The primary structure comprises 366 residues: uncharacterized protein (366 aa).

This is an uncharacterized protein from Amazona oratrix (yellow-headed parrot).